The primary structure comprises 83 residues: Small ribosomal subunit protein bS16 (83 aa).

This sequence belongs to the bacterial ribosomal protein bS16 family.

This Pseudomonas fluorescens (strain ATCC BAA-477 / NRRL B-23932 / Pf-5) protein is Small ribosomal subunit protein bS16.